The primary structure comprises 152 residues: Superoxide dismutase [Cu-Zn] 4A (152 aa).

3 residues coordinate Cu cation: histidine 45, histidine 47, and histidine 62. Residues cysteine 56 and cysteine 145 are joined by a disulfide bond. Positions 62, 70, 79, and 82 each coordinate Zn(2+). Histidine 119 provides a ligand contact to Cu cation.

The protein belongs to the Cu-Zn superoxide dismutase family. In terms of assembly, homodimer. Cu cation serves as cofactor. The cofactor is Zn(2+).

It localises to the cytoplasm. It carries out the reaction 2 superoxide + 2 H(+) = H2O2 + O2. Functionally, destroys radicals which are normally produced within the cells and which are toxic to biological systems. This chain is Superoxide dismutase [Cu-Zn] 4A (SODCC.3), found in Zea mays (Maize).